Reading from the N-terminus, the 393-residue chain is Elongation factor Tu (393 aa).

Residues 6–204 enclose the tr-type G domain; that stretch reads KPHINVGTIG…ALEKIELPMR (199 aa). Positions 15–22 are G1; sequence GHVDHGKT. 15-22 contributes to the GTP binding site; it reads GHVDHGKT. Mg(2+) is bound at residue Thr22. The segment at 58–62 is G2; it reads GITIS. Residues 79-82 form a G3 region; sequence DCPG. Residues 79–83 and 134–137 contribute to the GTP site; these read DCPGH and NKCD. Residues 134–137 are G4; that stretch reads NKCD. The interval 172-174 is G5; that stretch reads SAV.

This sequence belongs to the TRAFAC class translation factor GTPase superfamily. Classic translation factor GTPase family. EF-Tu/EF-1A subfamily. In terms of assembly, monomer.

The protein resides in the cytoplasm. The catalysed reaction is GTP + H2O = GDP + phosphate + H(+). Functionally, GTP hydrolase that promotes the GTP-dependent binding of aminoacyl-tRNA to the A-site of ribosomes during protein biosynthesis. The sequence is that of Elongation factor Tu from Anaplasma phagocytophilum (strain HZ).